We begin with the raw amino-acid sequence, 508 residues long: Photosystem II CP47 reaction center protein (508 aa).

The next 6 helical transmembrane spans lie at 21–36 (AVHL…WAGS), 101–115 (IVLS…IWHW), 140–156 (GIHL…FGAF), 203–218 (IAAG…FHLC), 237–252 (VLSS…AFVV), and 457–472 (CFAL…HGAR).

This sequence belongs to the PsbB/PsbC family. PsbB subfamily. PSII is composed of 1 copy each of membrane proteins PsbA, PsbB, PsbC, PsbD, PsbE, PsbF, PsbH, PsbI, PsbJ, PsbK, PsbL, PsbM, PsbT, PsbX, PsbY, PsbZ, Psb30/Ycf12, at least 3 peripheral proteins of the oxygen-evolving complex and a large number of cofactors. It forms dimeric complexes. Requires Binds multiple chlorophylls. PSII binds additional chlorophylls, carotenoids and specific lipids. as cofactor.

The protein localises to the plastid. The protein resides in the chloroplast thylakoid membrane. One of the components of the core complex of photosystem II (PSII). It binds chlorophyll and helps catalyze the primary light-induced photochemical processes of PSII. PSII is a light-driven water:plastoquinone oxidoreductase, using light energy to abstract electrons from H(2)O, generating O(2) and a proton gradient subsequently used for ATP formation. This chain is Photosystem II CP47 reaction center protein, found in Chlorella vulgaris (Green alga).